The chain runs to 265 residues: 6-carboxyhexanoate--CoA ligase (265 aa).

The protein belongs to the BioW family. Homodimer. The cofactor is Mg(2+).

It carries out the reaction heptanedioate + ATP + CoA = 6-carboxyhexanoyl-CoA + AMP + diphosphate. It functions in the pathway metabolic intermediate metabolism; pimeloyl-CoA biosynthesis; pimeloyl-CoA from pimelate: step 1/1. Its function is as follows. Catalyzes the transformation of pimelate into pimeloyl-CoA with concomitant hydrolysis of ATP to AMP. This chain is 6-carboxyhexanoate--CoA ligase, found in Syntrophotalea carbinolica (strain DSM 2380 / NBRC 103641 / GraBd1) (Pelobacter carbinolicus).